We begin with the raw amino-acid sequence, 198 residues long: Translation initiation factor IF-3 (198 aa).

Positions S168–E198 are disordered. Residues K178–E198 are compositionally biased toward basic and acidic residues.

It belongs to the IF-3 family. Monomer.

Its subcellular location is the cytoplasm. In terms of biological role, IF-3 binds to the 30S ribosomal subunit and shifts the equilibrium between 70S ribosomes and their 50S and 30S subunits in favor of the free subunits, thus enhancing the availability of 30S subunits on which protein synthesis initiation begins. This Phocaeicola vulgatus (strain ATCC 8482 / DSM 1447 / JCM 5826 / CCUG 4940 / NBRC 14291 / NCTC 11154) (Bacteroides vulgatus) protein is Translation initiation factor IF-3.